We begin with the raw amino-acid sequence, 1445 residues long: Protein HUA2-LIKE 1 (1445 aa).

The region spanning 20–77 is the PWWP domain; that stretch reads LGDLVLAKVKGFPAWPAKIGQPEDWNQAPDPKKHFVQFYGTGEIGFVTPPDIQPFTSE. 7 disordered regions span residues 133 to 197, 211 to 302, 319 to 356, 409 to 439, 460 to 491, 641 to 685, and 797 to 835; these read KYLN…SPDP, TCTD…DLNI, FENE…SKRL, EHTS…SDSD, DDDD…ANAS, GIPK…TSTP, and LTPS…SLSG. Polar residues-rich tracts occupy residues 173-187 and 211-225; these read QDSS…SPSS and TCTD…NLVN. Composition is skewed to basic and acidic residues over residues 228-257, 274-293, and 331-350; these read RIIR…RAAT, GQDH…ESSD, and DESK…DQKQ. Polar residues-rich tracts occupy residues 660 to 673 and 797 to 814; these read RVSS…NQRS and LTPS…QAGT. A CID domain is found at 838–979; the sequence is EAAISRDTFE…RYIGDLGASG (142 aa). Residues 1110 to 1203 form a disordered region; the sequence is PATTCATELP…SLPLQPGFAP (94 aa). A compositionally biased stretch (pro residues) spans 1124–1170; sequence GSPPLPHESPPSPPPQPPSSPPPPSSPPQLAPAPPPSDHCLPPPTAP.

As to expression, expressed throughout young primordia, and vegetative and reproductive apices.

The protein localises to the nucleus. Probable transcription factor that acts with partial redundancy with HULK2 and HULK3. Plays diverse and essential roles in the control of plant development, physiology and flowering time. The polypeptide is Protein HUA2-LIKE 1 (Arabidopsis thaliana (Mouse-ear cress)).